Reading from the N-terminus, the 323-residue chain is Rhazimal reductase 2 (323 aa).

Asp53 contacts NADP(+). Tyr58 acts as the Proton donor in catalysis. Residues 167–168 (SN), Gln189, 215–220 (WSPLLS), and 289–297 (DQIQQIPQR) contribute to the NADP(+) site.

Belongs to the aldo/keto reductase family. As to quaternary structure, monomer.

The enzyme catalyses rhazimol + NADP(+) = rhazimal + NADPH + 2 H(+). Its pathway is alkaloid biosynthesis. Oxidoreductase involved in the biosynthesis of akuammilan monoterpene indole alkaloids (MIAs) natural products, components with various biological properties such as antidiabetic, antibacterial, anti-inflammatory, anticancer, and antimalarial activities. Catalyzes the conversion of rhazimal to rhazimol. This chain is Rhazimal reductase 2, found in Alstonia scholaris (Dogbane).